The sequence spans 255 residues: Acetyl-coenzyme A carboxylase carboxyl transferase subunit alpha (255 aa).

The 235-residue stretch at 1–235 (MNIAKIVREA…KKELQTELAR (235 aa)) folds into the CoA carboxyltransferase C-terminal domain.

This sequence belongs to the AccA family. Acetyl-CoA carboxylase is a heterohexamer composed of biotin carboxyl carrier protein (AccB), biotin carboxylase (AccC) and two subunits each of ACCase subunit alpha (AccA) and ACCase subunit beta (AccD).

The protein resides in the cytoplasm. The enzyme catalyses N(6)-carboxybiotinyl-L-lysyl-[protein] + acetyl-CoA = N(6)-biotinyl-L-lysyl-[protein] + malonyl-CoA. Its pathway is lipid metabolism; malonyl-CoA biosynthesis; malonyl-CoA from acetyl-CoA: step 1/1. Component of the acetyl coenzyme A carboxylase (ACC) complex. First, biotin carboxylase catalyzes the carboxylation of biotin on its carrier protein (BCCP) and then the CO(2) group is transferred by the carboxyltransferase to acetyl-CoA to form malonyl-CoA. The chain is Acetyl-coenzyme A carboxylase carboxyl transferase subunit alpha from Streptococcus pneumoniae (strain CGSP14).